The sequence spans 252 residues: Imidazole glycerol phosphate synthase subunit HisF (252 aa).

Catalysis depends on residues Asp-11 and Asp-130.

This sequence belongs to the HisA/HisF family. In terms of assembly, heterodimer of HisH and HisF.

The protein resides in the cytoplasm. It catalyses the reaction 5-[(5-phospho-1-deoxy-D-ribulos-1-ylimino)methylamino]-1-(5-phospho-beta-D-ribosyl)imidazole-4-carboxamide + L-glutamine = D-erythro-1-(imidazol-4-yl)glycerol 3-phosphate + 5-amino-1-(5-phospho-beta-D-ribosyl)imidazole-4-carboxamide + L-glutamate + H(+). The protein operates within amino-acid biosynthesis; L-histidine biosynthesis; L-histidine from 5-phospho-alpha-D-ribose 1-diphosphate: step 5/9. In terms of biological role, IGPS catalyzes the conversion of PRFAR and glutamine to IGP, AICAR and glutamate. The HisF subunit catalyzes the cyclization activity that produces IGP and AICAR from PRFAR using the ammonia provided by the HisH subunit. This Lactiplantibacillus plantarum (strain ATCC BAA-793 / NCIMB 8826 / WCFS1) (Lactobacillus plantarum) protein is Imidazole glycerol phosphate synthase subunit HisF.